A 226-amino-acid polypeptide reads, in one-letter code: Putative mitochondrial outer membrane protein porin 5 (226 aa).

The protein belongs to the eukaryotic mitochondrial porin (TC 1.B.8.1) family.

It is found in the mitochondrion outer membrane. Functionally, putative channel that allows diffusion of small hydrophilic molecules through membranes. This is Putative mitochondrial outer membrane protein porin 5 (VDAC5) from Arabidopsis thaliana (Mouse-ear cress).